Consider the following 509-residue polypeptide: ESX-2 secretion system protein eccD2 (509 aa).

A run of 11 helical transmembrane segments spans residues 135-155 (LTAA…VLAL), 170-190 (AMAG…WWGW), 196-216 (LFSG…ACAP), 222-242 (AAHA…IGVA), 248-268 (QTAV…VAAV), 281-301 (ICVL…ALWV), 364-384 (VQVG…WGVL), 389-409 (PWAW…ITQG), 418-438 (AVAL…KYAL), 449-469 (LWPA…ALVV), and 487-507 (VLAM…FAWL).

This sequence belongs to the EccD/Snm4 family. In terms of assembly, part of the ESX-2 / type VII secretion system (T7SS), which is composed of cytosolic and membrane components.

Its subcellular location is the cell membrane. The protein is ESX-2 secretion system protein eccD2 (eccD2) of Mycobacterium tuberculosis (strain CDC 1551 / Oshkosh).